A 430-amino-acid polypeptide reads, in one-letter code: Probable carboxypeptidase AO090003000058 (430 aa).

A signal peptide spans 1–16; that stretch reads MKSIYSLVLCTALTAA. Asn84 carries N-linked (GlcNAc...) asparagine glycosylation. Residue Asp156 participates in Zn(2+) binding. The active-site Proton acceptor is Glu188. Residue Glu189 coordinates Zn(2+). The N-linked (GlcNAc...) asparagine glycan is linked to Asn285.

Belongs to the peptidase M20A family. The cofactor is Zn(2+).

The protein localises to the secreted. The chain is Probable carboxypeptidase AO090003000058 from Aspergillus oryzae (strain ATCC 42149 / RIB 40) (Yellow koji mold).